The following is a 298-amino-acid chain: Probable aspartoacylase (298 aa).

The Zn(2+) site is built by H13 and E16. Residues R54 and 61–62 contribute to the substrate site; that span reads NR. H103 is a Zn(2+) binding site. Substrate is bound by residues E161 and Y271.

Belongs to the AspA/AstE family. Aspartoacylase subfamily. Zn(2+) is required as a cofactor.

It catalyses the reaction an N-acyl-L-aspartate + H2O = a carboxylate + L-aspartate. This is Probable aspartoacylase from Prochlorococcus marinus (strain MIT 9515).